A 176-amino-acid polypeptide reads, in one-letter code: NAD(P)H-quinone oxidoreductase subunit 6, chloroplastic (176 aa).

Helical transmembrane passes span 10 to 30 (FLLVFLGSGLILGALGVVLFT), 33 to 53 (IFSAFSLGLVLVCISLFYILA), 63 to 83 (LLIYVGAINVLIIFSVMFMSG), 105 to 125 (ISLFVSLISTILNTSWYGIIW), and 152 to 172 (FFLPFELISIILLVSLIGAIA).

This sequence belongs to the complex I subunit 6 family. In terms of assembly, NDH is composed of at least 16 different subunits, 5 of which are encoded in the nucleus.

It localises to the plastid. The protein localises to the chloroplast thylakoid membrane. It carries out the reaction a plastoquinone + NADH + (n+1) H(+)(in) = a plastoquinol + NAD(+) + n H(+)(out). The enzyme catalyses a plastoquinone + NADPH + (n+1) H(+)(in) = a plastoquinol + NADP(+) + n H(+)(out). Its function is as follows. NDH shuttles electrons from NAD(P)H:plastoquinone, via FMN and iron-sulfur (Fe-S) centers, to quinones in the photosynthetic chain and possibly in a chloroplast respiratory chain. The immediate electron acceptor for the enzyme in this species is believed to be plastoquinone. Couples the redox reaction to proton translocation, and thus conserves the redox energy in a proton gradient. This is NAD(P)H-quinone oxidoreductase subunit 6, chloroplastic (ndhG) from Spinacia oleracea (Spinach).